A 176-amino-acid polypeptide reads, in one-letter code: NADH:riboflavin 5'-phosphate oxidoreductase (176 aa).

In terms of biological role, provides the reduced form of flavin mononucleotide for the PIIA synthase reaction. This Streptomyces pristinaespiralis protein is NADH:riboflavin 5'-phosphate oxidoreductase (snaC).